Here is a 566-residue protein sequence, read N- to C-terminus: Putative sulfite reductase [NADPH] hemoprotein beta-component (566 aa).

Residues C430, C436, C475, and C479 each contribute to the [4Fe-4S] cluster site. Residue C479 participates in siroheme binding.

Belongs to the nitrite and sulfite reductase 4Fe-4S domain family. Alpha(8)-beta(8). The alpha component is a flavoprotein, the beta component is a hemoprotein. Siroheme is required as a cofactor. It depends on [4Fe-4S] cluster as a cofactor.

It catalyses the reaction hydrogen sulfide + 3 NADP(+) + 3 H2O = sulfite + 3 NADPH + 4 H(+). It functions in the pathway sulfur metabolism; hydrogen sulfide biosynthesis; hydrogen sulfide from sulfite (NADPH route): step 1/1. Component of the sulfite reductase complex that catalyzes the 6-electron reduction of sulfite to sulfide. This is one of several activities required for the biosynthesis of L-cysteine from sulfate. The chain is Putative sulfite reductase [NADPH] hemoprotein beta-component from Buchnera aphidicola subsp. Schizaphis graminum (strain Sg).